Consider the following 500-residue polypeptide: MSNKDDLETAVITEATPIREDENCEPVKNFESVDQSAKSESKSEPVASTRKRPESKPSSDLETEVLPVQASQAAGKETVSKDVPQSGWGYWGSWGKSLLSSASATVATVGQGISNVIEKAETSLGIPSPSEISTEVQYATGETSAKENGNSSPMSGPFGVFSTISTAVQSTGKSVISGGLDALEFIGKKTMDVIAEGDPGFKRTKGLMNRTSTLSQVLREAKEKEELWTSNEVTMETDKKTHYGLLFDEFQGLSHLEALEMLSRESEIKVKSILNSLSGEELETLKLELEQLKEAFSLAELCEEEEEEKKGGEDFTKEITELFSQLHVSSKPEKLARARNTAYEWIRTSLAKPLKEKEEGEKQLEAENTEQINNKSIEDIHAFAIRSLAELTACSIELFHKTAALVLHGRKQEVTTIERSRALCQMTVLLCKELSCLSKEFTTCLTTAGVKEKADVLNPLITAVFLEASNSASYIQDAFQLLLPVLEISFIENKTELPEA.

The disordered stretch occupies residues 1 to 82 (MSNKDDLETA…AAGKETVSKD (82 aa)). Residues S93, S152, and S215 each carry the phosphoserine modification.

This sequence belongs to the FAM114 family.

The sequence is that of Protein FAM114A2 (FAM114A1) from Bos taurus (Bovine).